Consider the following 207-residue polypeptide: Ras-related protein RABH1d (207 aa).

G16–T23 contributes to the GTP binding site. Residues Y38–F46 carry the Effector region motif. GTP is bound by residues D64 to Q68, N122 to D125, and S152 to A153. Residues C205 and C207 are each lipidated (S-geranylgeranyl cysteine). Position 207 is a cysteine methyl ester (C207).

The protein belongs to the small GTPase superfamily. Rab family.

Its subcellular location is the golgi apparatus membrane. In terms of biological role, protein transport. Regulator of membrane traffic from the Golgi apparatus towards the endoplasmic reticulum (ER). The sequence is that of Ras-related protein RABH1d (RABH1D) from Arabidopsis thaliana (Mouse-ear cress).